We begin with the raw amino-acid sequence, 136 residues long: NHL-repeat-containing protein 4 (136 aa).

NHL repeat units follow at residues 48–91 and 93–132; these read QPLG…FPRV and PPICLQLEGLKRPLGMACAPQGQLVVADAGDNCIKLYQYL.

In Mus musculus (Mouse), this protein is NHL-repeat-containing protein 4 (Nhlrc4).